The primary structure comprises 501 residues: Protein DETOXIFICATION 37 (501 aa).

12 helical membrane-spanning segments follow: residues 44–64 (MMIE…VYVI), 84–104 (LAAA…LLLG), 134–154 (VVLI…NPIL), 163–183 (VATL…AYAV), 200–220 (SAYI…IAVY), 222–242 (LGYG…IIVV), 280–300 (AVML…AGLL), 310–330 (LAIC…FNAA), 352–372 (VVTT…VLSW), 396–416 (FLAI…VAVG), 422–442 (FVAY…GFVL), and 453–473 (IWTG…IVTL).

This sequence belongs to the multi antimicrobial extrusion (MATE) (TC 2.A.66.1) family.

Its subcellular location is the membrane. The chain is Protein DETOXIFICATION 37 from Arabidopsis thaliana (Mouse-ear cress).